Reading from the N-terminus, the 1220-residue chain is ATP-dependent helicase/nuclease subunit A (1220 aa).

Positions Val9–Arg473 constitute a UvrD-like helicase ATP-binding domain. Position 30-37 (Ala30–Thr37) interacts with ATP. A UvrD-like helicase C-terminal domain is found at Pro474 to Gly782.

The protein belongs to the helicase family. AddA subfamily. Heterodimer of AddA and AddB/RexB. The cofactor is Mg(2+).

The enzyme catalyses Couples ATP hydrolysis with the unwinding of duplex DNA by translocating in the 3'-5' direction.. The catalysed reaction is ATP + H2O = ADP + phosphate + H(+). In terms of biological role, the heterodimer acts as both an ATP-dependent DNA helicase and an ATP-dependent, dual-direction single-stranded exonuclease. Recognizes the chi site generating a DNA molecule suitable for the initiation of homologous recombination. The AddA nuclease domain is required for chi fragment generation; this subunit has the helicase and 3' -&gt; 5' nuclease activities. This chain is ATP-dependent helicase/nuclease subunit A, found in Staphylococcus carnosus (strain TM300).